A 314-amino-acid polypeptide reads, in one-letter code: Olfactory receptor 5D14 (314 aa).

Residues 1-27 are Extracellular-facing; that stretch reads MMMVLRNLSMEPTFALLGFTDYPKLQI. N-linked (GlcNAc...) asparagine glycosylation occurs at Asn-7. The chain crosses the membrane as a helical span at residues 28 to 48; sequence PLFLVFLLMYVITVVGNLGMI. The Cytoplasmic portion of the chain corresponds to 49 to 56; that stretch reads IIIKINPK. Residues 57–77 form a helical membrane-spanning segment; it reads FHTPMYFFLSHLSFVDFCYSS. Residues 78-101 are Extracellular-facing; the sequence is IVTPKLLENLVMADKSIFYFSCMM. Residues 102–122 traverse the membrane as a helical segment; it reads QYFLSCTAVVTESFLLAVMAY. At 123-141 the chain is on the cytoplasmic side; it reads DRFVAICNPLLYTVAMSQR. A helical transmembrane segment spans residues 142 to 162; the sequence is LCALLVAGSYLWGMFGPLVLL. The Extracellular portion of the chain corresponds to 163-198; the sequence is CYALRLNFSGPNVINHFFCEYTALISVSGSDILIPH. A glycan (N-linked (GlcNAc...) asparagine) is linked at Asn-169. A helical membrane pass occupies residues 199–219; that stretch reads LLLFSFATFNEMCTLLIILTS. The Cytoplasmic portion of the chain corresponds to 220 to 239; the sequence is YVFIFVTVLKIRSVSGRHKA. The helical transmembrane segment at 240-260 threads the bilayer; the sequence is FSTWASHLTSITIFHGTILFL. At 261–273 the chain is on the extracellular side; the sequence is YCVPNSKNSRQTV. Residues 274-294 form a helical membrane-spanning segment; it reads KVASVFYTVVNPMLNPLIYSL. Topologically, residues 295-314 are cytoplasmic; that stretch reads RNKDVKDAFWKLIHTQVPFH.

Belongs to the G-protein coupled receptor 1 family.

The protein resides in the cell membrane. Functionally, odorant receptor. This Homo sapiens (Human) protein is Olfactory receptor 5D14 (OR5D14).